We begin with the raw amino-acid sequence, 239 residues long: Fatty acid metabolism regulator protein (239 aa).

The HTH gntR-type domain occupies 6–74 (QSPAGFAEEY…HGKPTKVNNF (69 aa)). The segment at residues 34–53 (ERELSELIGVTRTTLREVLQ) is a DNA-binding region (H-T-H motif).

In terms of assembly, homodimer.

It localises to the cytoplasm. Multifunctional regulator of fatty acid metabolism. This Cronobacter sakazakii (strain ATCC BAA-894) (Enterobacter sakazakii) protein is Fatty acid metabolism regulator protein.